Here is a 127-residue protein sequence, read N- to C-terminus: Small ribosomal subunit protein bS6 (127 aa).

Residues 96–127 are disordered; that stretch reads VTTPSPMMKEEKSRSLTPAAGDEGKPAEAAEA. Basic and acidic residues predominate over residues 117–127; sequence DEGKPAEAAEA.

It belongs to the bacterial ribosomal protein bS6 family.

Binds together with bS18 to 16S ribosomal RNA. The polypeptide is Small ribosomal subunit protein bS6 (Azoarcus sp. (strain BH72)).